Consider the following 119-residue polypeptide: Large ribosomal subunit protein uL22c (119 aa).

Belongs to the universal ribosomal protein uL22 family. Part of the 50S ribosomal subunit.

It is found in the plastid. It localises to the chloroplast. Functionally, this protein binds specifically to 23S rRNA. Its function is as follows. The globular domain of the protein is located near the polypeptide exit tunnel on the outside of the subunit, while an extended beta-hairpin is found that lines the wall of the exit tunnel in the center of the 70S ribosome. The polypeptide is Large ribosomal subunit protein uL22c (rpl22) (Marchantia polymorpha (Common liverwort)).